A 979-amino-acid polypeptide reads, in one-letter code: MVLNAPILKSNEQQVLNQKSQKLSSFAPRHIGPNSDDIQQMLKVLGFPSLDALIDKTVPQTIRLKQPLKLPEAESEYAALASLKKIAAKNQVFRSYIGMGYYDTITPLVIGRNILENPGWYTAYTPYQPEIAQGRLEALLNFQTLIIDLTGLEIANASLLDEATAAAEAMSLSYGVSKNQANAYFVSHDCHPQTIDVLQTRAKPLGINIIVGDHQTFDFDRAIFGAVLQYPASDGTIYDYRAFIEKAHAKGALVTVAADPLSLTLLTPPGEFGADIAVGSTQRFGIPLGFGGPHAAYFATKEEYKRLVPGRIVGVSKDAQGKPALRLALQTREQHIRREKATSNICTAQVLLAVMASMYAVYHGPDGLKQIAENIHQLTLMLAAGLKHLGYKISSEHFFDTLRVELGTRSLEVILEACQARNINLRIFDDTAVGISVDETTTADDLIELFEIFAAPDSLLFGFKEIGDLIAARRKSSLQNSTFARTSNYLTHPVFNRYHSETELLRYLHKLESKDLSLTTSMIPLGSCTMKLNATAEMIPVTWEEFGKIHPFAPASQTQGYQILFQQLEAWLAEITGFAGISLQPNAGSQGEYAGLLVIRQYHENRGEAHRNVCLIPTSAHGTNPASAVMCGMKVVAVACDSQGNIDVDDLKAKAEKHSHELAALMVTYPSTHGVFEEPIQEICAVVHSHGGQVYMDGANMNAQVGICRPGDIGADVCHLNLHKTFCIPHGGGGPGMGPIGVASHLVPFLPGHPVVTINDSTQHSHIGAVAAAPWGSASILVISWMYIAMMGADGLTQATKVAILNANYIAKKLESYYPVLYQGKNGLVAHECILDLRSLKKSAAIEIDDVAKRLMDYGFHAPTVSWPVGGTIMVEPTESESKQELDRFCDALIAIRQEIAEIEVGKVDAQDNVLKNAPHTAESLITGEWQHPYSREQAAYPAPWTREYKFWPAVGRIDAAFGDRNFVCSCLPMDAYSS.

Position 724 is an N6-(pyridoxal phosphate)lysine (Lys724).

The protein belongs to the GcvP family. The glycine cleavage system is composed of four proteins: P, T, L and H. Requires pyridoxal 5'-phosphate as cofactor.

The enzyme catalyses N(6)-[(R)-lipoyl]-L-lysyl-[glycine-cleavage complex H protein] + glycine + H(+) = N(6)-[(R)-S(8)-aminomethyldihydrolipoyl]-L-lysyl-[glycine-cleavage complex H protein] + CO2. The glycine cleavage system catalyzes the degradation of glycine. The P protein binds the alpha-amino group of glycine through its pyridoxal phosphate cofactor; CO(2) is released and the remaining methylamine moiety is then transferred to the lipoamide cofactor of the H protein. This is Glycine dehydrogenase (decarboxylating) from Nostoc punctiforme (strain ATCC 29133 / PCC 73102).